The chain runs to 188 residues: Interferon alpha-2 (188 aa).

The signal sequence occupies residues 1–23 (MALTFALLVALLVLSCKSSCSVG). 2 cysteine pairs are disulfide-bonded: Cys24–Cys121 and Cys52–Cys161. Thr129 carries O-linked (GalNAc...) threonine glycosylation.

The protein belongs to the alpha/beta interferon family. Interacts with IFNAR2.

The protein localises to the secreted. Its function is as follows. Produced by macrophages, IFN-alpha have antiviral activities. This chain is Interferon alpha-2 (IFNA2), found in Homo sapiens (Human).